Here is an 86-residue protein sequence, read N- to C-terminus: Large ribosomal subunit protein bL27 (86 aa).

It belongs to the bacterial ribosomal protein bL27 family.

This chain is Large ribosomal subunit protein bL27, found in Cupriavidus metallidurans (strain ATCC 43123 / DSM 2839 / NBRC 102507 / CH34) (Ralstonia metallidurans).